Reading from the N-terminus, the 303-residue chain is Protein-lysine N-methyltransferase rrg1 (303 aa).

S-adenosyl-L-methionine is bound by residues W117, 143 to 145, D165, W198, and S221; that span reads GAG.

It belongs to the class I-like SAM-binding methyltransferase superfamily. METTL21 family.

It localises to the cytoplasm. The protein resides in the nucleus. Its function is as follows. S-adenosyl-L-methionine-dependent protein-lysine N-methyltransferase that methylates elongation factor 2 and elongation factor 3A. The sequence is that of Protein-lysine N-methyltransferase rrg1 from Schizosaccharomyces pombe (strain 972 / ATCC 24843) (Fission yeast).